A 538-amino-acid polypeptide reads, in one-letter code: Calcium-dependent protein kinase 8 (538 aa).

Residues 1–26 (MGNCCGTPATAEEGGKRRRRGKQKKA) form a disordered region. G2 carries N-myristoyl glycine lipidation. Residues 16-25 (KRRRRGKQKK) show a composition bias toward basic residues. The Protein kinase domain maps to 64–322 (YELGGELGRG…AEQVLEHPWL (259 aa)). Residues 70-78 (LGRGEFGIT) and K93 each bind ATP. Catalysis depends on D188, which acts as the Proton acceptor. Residues 328 to 358 (MPDIPLGDAVRARLQQFAAMNKLKKKALKVI) are autoinhibitory domain. EF-hand domains follow at residues 365–400 (EEAA…LGNQ), 401–436 (MPDS…VRKI), 437–472 (GNDE…EIDG), and 473–508 (NDED…GTDW). The Ca(2+) site is built by D378, S380, N382, Q384, D389, D414, D416, N418, E425, D450, N452, S454, Y456, E461, D486, D488, D490, K492, and E497.

The protein belongs to the protein kinase superfamily. Ser/Thr protein kinase family. CDPK subfamily.

It localises to the membrane. It catalyses the reaction L-seryl-[protein] + ATP = O-phospho-L-seryl-[protein] + ADP + H(+). The enzyme catalyses L-threonyl-[protein] + ATP = O-phospho-L-threonyl-[protein] + ADP + H(+). Its activity is regulated as follows. Activated by calcium. Autophosphorylation may play an important role in the regulation of the kinase activity. May play a role in signal transduction pathways that involve calcium as a second messenger. The sequence is that of Calcium-dependent protein kinase 8 from Oryza sativa subsp. japonica (Rice).